The following is a 295-amino-acid chain: Putative S-adenosyl-L-methionine-dependent methyltransferase Mvan_0910 (295 aa).

S-adenosyl-L-methionine is bound by residues aspartate 126 and 155–156 (DL).

The protein belongs to the UPF0677 family.

Functionally, exhibits S-adenosyl-L-methionine-dependent methyltransferase activity. The polypeptide is Putative S-adenosyl-L-methionine-dependent methyltransferase Mvan_0910 (Mycolicibacterium vanbaalenii (strain DSM 7251 / JCM 13017 / BCRC 16820 / KCTC 9966 / NRRL B-24157 / PYR-1) (Mycobacterium vanbaalenii)).